The primary structure comprises 475 residues: Sulfate adenylyltransferase subunit 1 (475 aa).

Positions 25-239 (KSLLRFLTCG…EVLETVEIQR (215 aa)) constitute a tr-type G domain. A G1 region spans residues 34–41 (GSVDDGKS). 34 to 41 (GSVDDGKS) provides a ligand contact to GTP. The segment at 92 to 96 (GITID) is G2. The G3 stretch occupies residues 113 to 116 (DTPG). GTP contacts are provided by residues 113 to 117 (DTPGH) and 168 to 171 (NKMD). Residues 168–171 (NKMD) are G4. Positions 206–208 (SAL) are G5.

This sequence belongs to the TRAFAC class translation factor GTPase superfamily. Classic translation factor GTPase family. CysN/NodQ subfamily. As to quaternary structure, heterodimer composed of CysD, the smaller subunit, and CysN.

The enzyme catalyses sulfate + ATP + H(+) = adenosine 5'-phosphosulfate + diphosphate. The protein operates within sulfur metabolism; hydrogen sulfide biosynthesis; sulfite from sulfate: step 1/3. Functionally, with CysD forms the ATP sulfurylase (ATPS) that catalyzes the adenylation of sulfate producing adenosine 5'-phosphosulfate (APS) and diphosphate, the first enzymatic step in sulfur assimilation pathway. APS synthesis involves the formation of a high-energy phosphoric-sulfuric acid anhydride bond driven by GTP hydrolysis by CysN coupled to ATP hydrolysis by CysD. The protein is Sulfate adenylyltransferase subunit 1 of Shigella boydii serotype 18 (strain CDC 3083-94 / BS512).